The chain runs to 138 residues: Lutropin subunit beta (138 aa).

Positions 1-19 are cleaved as a signal peptide; the sequence is RYQELTVLLLLLLEGGSWG. Intrachain disulfides connect Cys-27-Cys-75, Cys-41-Cys-90, Cys-44-Cys-128, Cys-52-Cys-106, Cys-56-Cys-108, and Cys-111-Cys-118. Asn-31 carries N-linked (GlcNAc...) asparagine glycosylation.

It belongs to the glycoprotein hormones subunit beta family. As to quaternary structure, heterodimer of a common alpha chain and a unique beta chain which confers biological specificity to thyrotropin, lutropin, follitropin and gonadotropin.

The protein resides in the secreted. Its function is as follows. Promotes spermatogenesis and ovulation by stimulating the testes and ovaries to synthesize steroids. In Osphranter rufus (Red kangaroo), this protein is Lutropin subunit beta (LHB).